A 316-amino-acid chain; its full sequence is MELDTTHISVLLNEAVDGLAITDDGCYIDCTFGRGGHSSVILSKLSDNGRLIAIDRDPTAITAAEKFKDDKRFLIEHQGFAALAEIAEKHELTGKVDGILLDLGVSSPQLDEAERGFSFMKDGPLDMRMDTSKGQTAAEWLAVADVEDITWVLRTFGEEKHAWRIANAIVDTREETPLTRTSQLAKLIKTTAPQREIKKHPATRSFQAIRMYINSELDQIEKALVASLDVLAEGGRLVVISFHSLEDRLVKQFMKKHSQGKKVPRGLPISEIELNKGKKLSLVGRRLKPSQTEVEENVRSRSSVLRVAERLERNTD.

Residues 35–37 (GGH), Asp55, Phe80, Asp102, and Gln109 contribute to the S-adenosyl-L-methionine site.

It belongs to the methyltransferase superfamily. RsmH family.

It is found in the cytoplasm. It catalyses the reaction cytidine(1402) in 16S rRNA + S-adenosyl-L-methionine = N(4)-methylcytidine(1402) in 16S rRNA + S-adenosyl-L-homocysteine + H(+). Specifically methylates the N4 position of cytidine in position 1402 (C1402) of 16S rRNA. This is Ribosomal RNA small subunit methyltransferase H from Colwellia psychrerythraea (strain 34H / ATCC BAA-681) (Vibrio psychroerythus).